A 237-amino-acid chain; its full sequence is Probable glutathione-independent glyoxalase SNO4 (237 aa).

Active-site residues include Cys138, His139, and Glu170.

This sequence belongs to the peptidase C56 family. HSP31-like subfamily. In terms of assembly, homodimer.

It is found in the cytoplasm. The protein resides in the P-body. The enzyme catalyses methylglyoxal + H2O = (R)-lactate + H(+). Functionally, catalyzes the conversion of methylglyoxal (MG) to D-lactate in a single glutathione (GSH)-independent step. May play a role in detoxifying endogenously produced glyoxals. Involved in protection against reactive oxygen species (ROS). Important for viability in stationary phase. May negatively regulate TORC1 in response to nutrient limitation. The chain is Probable glutathione-independent glyoxalase SNO4 from Saccharomyces cerevisiae (strain ATCC 204508 / S288c) (Baker's yeast).